A 411-amino-acid chain; its full sequence is Serpin A3-3 (411 aa).

An N-terminal signal peptide occupies residues 1 to 24 (MRAERLSPLLALGLLVAGIRSVHC). N-linked (GlcNAc...) asparagine glycans are attached at residues Asn-100, Asn-180, Asn-230, Asn-264, and Asn-318.

This sequence belongs to the serpin family. In terms of assembly, homodimer.

The protein localises to the cytoplasmic vesicle. The protein resides in the secretory vesicle. It localises to the chromaffin granule. It is found in the secreted. In terms of biological role, serine protease inhibitor. Strongly inhibits elastase and trypsin stoichiometrically at the molar ratio of 1:1. Acts as a moderate inhibitor of plasmin and chymotrypsin. Does not inhibit thrombin, urokinase, kallikrein, tissue plasminogen activator, cathepsin G or the cysteine proteases papain, cathepsin B or cathepsin L. This is Serpin A3-3 (SERPINA3-3) from Bos taurus (Bovine).